Here is a 449-residue protein sequence, read N- to C-terminus: UDP-N-acetylglucosamine 1-carboxyvinyltransferase (449 aa).

51-52 provides a ligand contact to phosphoenolpyruvate; that stretch reads KN. R121 contributes to the UDP-N-acetyl-alpha-D-glucosamine binding site. The active-site Proton donor is C145. Residue C145 is modified to 2-(S-cysteinyl)pyruvic acid O-phosphothioketal. Residues 150–154, D333, and I355 each bind UDP-N-acetyl-alpha-D-glucosamine; that span reads RPVDQ.

It belongs to the EPSP synthase family. MurA subfamily.

The protein resides in the cytoplasm. It catalyses the reaction phosphoenolpyruvate + UDP-N-acetyl-alpha-D-glucosamine = UDP-N-acetyl-3-O-(1-carboxyvinyl)-alpha-D-glucosamine + phosphate. Its pathway is cell wall biogenesis; peptidoglycan biosynthesis. Functionally, cell wall formation. Adds enolpyruvyl to UDP-N-acetylglucosamine. This is UDP-N-acetylglucosamine 1-carboxyvinyltransferase from Burkholderia lata (strain ATCC 17760 / DSM 23089 / LMG 22485 / NCIMB 9086 / R18194 / 383).